A 289-amino-acid polypeptide reads, in one-letter code: ATP synthase gamma chain (289 aa).

Belongs to the ATPase gamma chain family. As to quaternary structure, F-type ATPases have 2 components, CF(1) - the catalytic core - and CF(0) - the membrane proton channel. CF(1) has five subunits: alpha(3), beta(3), gamma(1), delta(1), epsilon(1). CF(0) has three main subunits: a, b and c.

The protein resides in the cell inner membrane. Produces ATP from ADP in the presence of a proton gradient across the membrane. The gamma chain is believed to be important in regulating ATPase activity and the flow of protons through the CF(0) complex. The protein is ATP synthase gamma chain of Coxiella burnetii (strain CbuG_Q212) (Coxiella burnetii (strain Q212)).